The chain runs to 236 residues: Eukaryotic translation initiation factor 3 subunit J (236 aa).

A disordered region spans residues 1 to 84 (MADDWESAAD…LREEEAEAER (84 aa)). Residues 28-46 (GEDEDEDIKDSWEDEEEKK) show a composition bias toward acidic residues. Composition is skewed to basic and acidic residues over residues 47-58 (DEEKPTKTEAPA) and 68-77 (AKLEQQALRE).

This sequence belongs to the eIF-3 subunit J family. As to quaternary structure, component of the eukaryotic translation initiation factor 3 (eIF-3) complex. The eIF-3 complex interacts with pix.

It is found in the cytoplasm. Its function is as follows. Component of the eukaryotic translation initiation factor 3 (eIF-3) complex, which is involved in protein synthesis of a specialized repertoire of mRNAs and, together with other initiation factors, stimulates binding of mRNA and methionyl-tRNAi to the 40S ribosome. The eIF-3 complex specifically targets and initiates translation of a subset of mRNAs involved in cell proliferation. This is Eukaryotic translation initiation factor 3 subunit J from Drosophila sechellia (Fruit fly).